We begin with the raw amino-acid sequence, 80 residues long: Large ribosomal subunit protein bL31B (80 aa).

Belongs to the bacterial ribosomal protein bL31 family. Type B subfamily. As to quaternary structure, part of the 50S ribosomal subunit.

The sequence is that of Large ribosomal subunit protein bL31B from Streptococcus sanguinis (strain SK36).